Reading from the N-terminus, the 160-residue chain is MAPK regulated corepressor interacting protein 2 (160 aa).

Residue methionine 1 is modified to N-acetylmethionine. Residues methionine 1–proline 64 form a disordered region. An Omega-N-methylarginine modification is found at arginine 35. A compositionally biased stretch (pro residues) spans proline 37–serine 61. Serine 61 carries the post-translational modification Phosphoserine. Arginine 65 is modified (omega-N-methylarginine). Serine 82 carries the phosphoserine modification.

Belongs to the MCRIP family. Interacts with DDX6. Interacts with MCRIP1.

It is found in the cytoplasm. The protein resides in the stress granule. Its subcellular location is the nucleus. This chain is MAPK regulated corepressor interacting protein 2 (MCRIP2), found in Homo sapiens (Human).